Consider the following 519-residue polypeptide: Transketolase, chloroplastic (519 aa).

Asp11 lines the Mg(2+) pocket. The thiamine diphosphate site is built by Gly12 and Asn41. Residues Asn41 and Ile43 each contribute to the Mg(2+) site. His118 contributes to the thiamine diphosphate binding site. Residues His118, Arg212, and Ser239 each contribute to the substrate site. Residues Glu266 and Phe293 each coordinate thiamine diphosphate. The Proton donor role is filled by Glu266. Residues His317, Asp325, and Arg376 each coordinate substrate.

Belongs to the transketolase family. Homodimer. Mg(2+) is required as a cofactor. Requires Ca(2+) as cofactor. It depends on Mn(2+) as a cofactor. The cofactor is Co(2+). Thiamine diphosphate serves as cofactor. As to expression, constitutively expressed in leaves and roots.

The protein localises to the plastid. It is found in the chloroplast. It catalyses the reaction D-sedoheptulose 7-phosphate + D-glyceraldehyde 3-phosphate = aldehydo-D-ribose 5-phosphate + D-xylulose 5-phosphate. Functionally, catalyzes the transfer of a two-carbon ketol group from a ketose donor to an aldose acceptor, via a covalent intermediate with the cofactor thiamine pyrophosphate. This Craterostigma plantagineum (Blue gem) protein is Transketolase, chloroplastic (TKT3).